Here is a 436-residue protein sequence, read N- to C-terminus: GTPase Der (436 aa).

EngA-type G domains follow at residues 4-167 (PTVA…PTEV) and 175-351 (IRFS…ESQN). GTP contacts are provided by residues 10–17 (GRPNVGKS), 57–61 (DTGGI), 119–122 (NKVD), 181–188 (GRPNVGKS), 229–233 (DTAGM), and 294–297 (NKWD). Residues 352–436 (RRISSAVLND…PIHLIARKRK (85 aa)) form the KH-like domain.

Belongs to the TRAFAC class TrmE-Era-EngA-EngB-Septin-like GTPase superfamily. EngA (Der) GTPase family. As to quaternary structure, associates with the 50S ribosomal subunit.

GTPase that plays an essential role in the late steps of ribosome biogenesis. The polypeptide is GTPase Der (Streptococcus thermophilus (strain ATCC BAA-491 / LMD-9)).